Reading from the N-terminus, the 262-residue chain is Type III pantothenate kinase (262 aa).

9 to 16 is an ATP binding site; sequence DIGNTNVK. Substrate is bound by residues Tyr-103 and 110-113; that span reads GADR. Catalysis depends on Asp-112, which acts as the Proton acceptor. Asp-134 lines the K(+) pocket. ATP is bound at residue Thr-137. Residue Thr-190 coordinates substrate.

This sequence belongs to the type III pantothenate kinase family. Homodimer. It depends on NH4(+) as a cofactor. Requires K(+) as cofactor.

It localises to the cytoplasm. It carries out the reaction (R)-pantothenate + ATP = (R)-4'-phosphopantothenate + ADP + H(+). The protein operates within cofactor biosynthesis; coenzyme A biosynthesis; CoA from (R)-pantothenate: step 1/5. Functionally, catalyzes the phosphorylation of pantothenate (Pan), the first step in CoA biosynthesis. The sequence is that of Type III pantothenate kinase from Nitratidesulfovibrio vulgaris (strain DSM 19637 / Miyazaki F) (Desulfovibrio vulgaris).